Here is a 284-residue protein sequence, read N- to C-terminus: Bifunctional protein FolD 1 (284 aa).

NADP(+) contacts are provided by residues 166–168 (GAS) and isoleucine 232.

The protein belongs to the tetrahydrofolate dehydrogenase/cyclohydrolase family. As to quaternary structure, homodimer.

The catalysed reaction is (6R)-5,10-methylene-5,6,7,8-tetrahydrofolate + NADP(+) = (6R)-5,10-methenyltetrahydrofolate + NADPH. It catalyses the reaction (6R)-5,10-methenyltetrahydrofolate + H2O = (6R)-10-formyltetrahydrofolate + H(+). The protein operates within one-carbon metabolism; tetrahydrofolate interconversion. Its function is as follows. Catalyzes the oxidation of 5,10-methylenetetrahydrofolate to 5,10-methenyltetrahydrofolate and then the hydrolysis of 5,10-methenyltetrahydrofolate to 10-formyltetrahydrofolate. This is Bifunctional protein FolD 1 from Pseudomonas savastanoi pv. phaseolicola (strain 1448A / Race 6) (Pseudomonas syringae pv. phaseolicola (strain 1448A / Race 6)).